The chain runs to 108 residues: Insulin (108 aa).

The signal sequence occupies residues 1 to 21; sequence MAVWIQAGALLFLLAVSSVNA. Disulfide bonds link C30–C94, C42–C107, and C93–C98. Residues 54-85 constitute a propeptide, c peptide; sequence DVDPPLGFLPPKSAQETEVADFAFKDHAEVIR.

The protein belongs to the insulin family. Heterodimer of a B chain and an A chain linked by two disulfide bonds.

The protein localises to the secreted. In terms of biological role, insulin decreases blood glucose concentration. It increases cell permeability to monosaccharides, amino acids and fatty acids. It accelerates glycolysis, the pentose phosphate cycle, and glycogen synthesis in liver. This chain is Insulin (ins), found in Cyprinus carpio (Common carp).